A 388-amino-acid chain; its full sequence is S-adenosylmethionine synthase (388 aa).

H17 provides a ligand contact to ATP. Position 19 (D19) interacts with Mg(2+). E45 contributes to the K(+) binding site. Residues E58 and Q106 each contribute to the L-methionine site. The flexible loop stretch occupies residues 106–116; sequence QSAHIAQGVDK. ATP contacts are provided by residues 166–168, D241, 247–248, A264, and K268; these read DAK and RK. L-methionine is bound at residue D241. K272 is a binding site for L-methionine.

It belongs to the AdoMet synthase family. Homotetramer; dimer of dimers. Mg(2+) is required as a cofactor. K(+) serves as cofactor.

The protein resides in the cytoplasm. It catalyses the reaction L-methionine + ATP + H2O = S-adenosyl-L-methionine + phosphate + diphosphate. The protein operates within amino-acid biosynthesis; S-adenosyl-L-methionine biosynthesis; S-adenosyl-L-methionine from L-methionine: step 1/1. Its function is as follows. Catalyzes the formation of S-adenosylmethionine (AdoMet) from methionine and ATP. The overall synthetic reaction is composed of two sequential steps, AdoMet formation and the subsequent tripolyphosphate hydrolysis which occurs prior to release of AdoMet from the enzyme. The sequence is that of S-adenosylmethionine synthase from Cereibacter sphaeroides (strain ATCC 17023 / DSM 158 / JCM 6121 / CCUG 31486 / LMG 2827 / NBRC 12203 / NCIMB 8253 / ATH 2.4.1.) (Rhodobacter sphaeroides).